A 123-amino-acid chain; its full sequence is Small ribosomal subunit protein uS11 (123 aa).

It belongs to the universal ribosomal protein uS11 family. In terms of assembly, part of the 30S ribosomal subunit. Interacts with proteins S7 and S18. Binds to IF-3.

Functionally, located on the platform of the 30S subunit, it bridges several disparate RNA helices of the 16S rRNA. Forms part of the Shine-Dalgarno cleft in the 70S ribosome. In Coxiella burnetii (strain CbuK_Q154) (Coxiella burnetii (strain Q154)), this protein is Small ribosomal subunit protein uS11.